The following is a 754-amino-acid chain: 5-methyltetrahydropteroyltriglutamate--homocysteine methyltransferase (754 aa).

Residues 17 to 20 and K117 each bind 5-methyltetrahydropteroyltri-L-glutamate; that span reads RELK. L-homocysteine is bound by residues 431-433 and E484; that span reads IGS. L-methionine contacts are provided by residues 431–433 and E484; that span reads IGS. Residues 515–516 and W561 contribute to the 5-methyltetrahydropteroyltri-L-glutamate site; that span reads RC. L-homocysteine is bound at residue D599. D599 lines the L-methionine pocket. E605 lines the 5-methyltetrahydropteroyltri-L-glutamate pocket. Zn(2+)-binding residues include H641, C643, and E665. H694 acts as the Proton donor in catalysis. C726 contributes to the Zn(2+) binding site.

The protein belongs to the vitamin-B12 independent methionine synthase family. The cofactor is Zn(2+).

It carries out the reaction 5-methyltetrahydropteroyltri-L-glutamate + L-homocysteine = tetrahydropteroyltri-L-glutamate + L-methionine. Its pathway is amino-acid biosynthesis; L-methionine biosynthesis via de novo pathway; L-methionine from L-homocysteine (MetE route): step 1/1. Its function is as follows. Catalyzes the transfer of a methyl group from 5-methyltetrahydrofolate to homocysteine resulting in methionine formation. This is 5-methyltetrahydropteroyltriglutamate--homocysteine methyltransferase from Salmonella typhi.